The following is a 366-amino-acid chain: Bacteriochlorophyll a protein (366 aa).

Positions 111, 146, 290, 297, and 298 each coordinate bacteriochlorophyll a.

Homotrimer. Each subunit contains 7 molecules of bacteriochlorophyll a.

In terms of biological role, intermediary in the transfer of excitation energy from the chlorophyll to the reaction centers. This is Bacteriochlorophyll a protein (fmoA) from Chlorobaculum tepidum (strain ATCC 49652 / DSM 12025 / NBRC 103806 / TLS) (Chlorobium tepidum).